The chain runs to 96 residues: Probable quinol oxidase subunit 4 (96 aa).

Transmembrane regions (helical) follow at residues 8-28, 36-56, and 68-88; these read TVGF…TLYT, VTII…MFMH, and FKVI…YWVM.

This sequence belongs to the cytochrome c oxidase bacterial subunit 4 family.

Its subcellular location is the cell membrane. It carries out the reaction 2 a quinol + O2 = 2 a quinone + 2 H2O. Functionally, catalyzes quinol oxidation with the concomitant reduction of oxygen to water. This chain is Probable quinol oxidase subunit 4 (qoxD), found in Staphylococcus epidermidis (strain ATCC 35984 / DSM 28319 / BCRC 17069 / CCUG 31568 / BM 3577 / RP62A).